A 349-amino-acid chain; its full sequence is Transcription elongation factor A protein 3 (349 aa).

In terms of domain architecture, TFIIS N-terminal spans 5 to 82; it reads EELLRIAKKL…RNWKQLLDSP (78 aa). Positions 80 to 170 are disordered; the sequence is DSPATPKGEK…RTPSSPSSPT (91 aa). Residues 101-110 are compositionally biased toward basic and acidic residues; it reads KGLDCSDWKP. A Phosphoserine modification is found at Ser115. Residues 121–133 are compositionally biased toward basic and acidic residues; sequence RVEEPKDRRDSVD. Composition is skewed to low complexity over residues 134-144 and 160-170; these read SKSSATSSPKR and PRTPSSPSSPT. Ser141 is subject to Phosphoserine. Residues 188-304 enclose the TFIIS central domain; it reads VRDKCVEMLS…EHQMAKTGGT (117 aa). Residues 307–347 form a TFIIS-type zinc finger; the sequence is DLFQCSKCKKKNCTYNQVQTRSADEPMTTFVLCNECGNRWK. Zn(2+) is bound by residues Cys311, Cys314, Cys339, and Cys342.

It belongs to the TFS-II family.

Its subcellular location is the nucleus. Necessary for efficient RNA polymerase II transcription elongation past template-encoded arresting sites. The arresting sites in DNA have the property of trapping a certain fraction of elongating RNA polymerases that pass through, resulting in locked ternary complexes. Cleavage of the nascent transcript by S-II allows the resumption of elongation from the new 3'-terminus. In Bos taurus (Bovine), this protein is Transcription elongation factor A protein 3 (TCEA3).